The chain runs to 797 residues: Protocadherin beta-11 (797 aa).

An N-terminal signal peptide occupies residues 1 to 26; the sequence is MENQGTRTQQIRQVLLLFVLLGMSQA. Topologically, residues 27–690 are extracellular; sequence GSETWSFSVA…AQADSLTVYL (664 aa). Cadherin domains follow at residues 35–133, 138–242, 247–347, 352–451, and 456–561; these read VAEE…SPIF, MLLE…SPEF, YEVK…APEI, ITSP…APTF, and YTLF…SPFV. Asn418, Asn436, Asn487, and Asn567 each carry an N-linked (GlcNAc...) asparagine glycan. The Cadherin 6 domain occupies 568–671; the sequence is GSAPCTELVP…LVDGFSQPYL (104 aa). Residues 691–711 traverse the membrane as a helical segment; that stretch reads VVALASVSSLFLFSVLLFVAV. At 712–797 the chain is on the cytoplasmic side; that stretch reads RLCRRSRAAS…TFRNSFGFNF (86 aa).

Its subcellular location is the cell membrane. Potential calcium-dependent cell-adhesion protein. May be involved in the establishment and maintenance of specific neuronal connections in the brain. In Homo sapiens (Human), this protein is Protocadherin beta-11 (PCDHB11).